The sequence spans 560 residues: MKAAYNYRATKTACSDRQVLILGTSWADPQPGTMEEIRISIVNDKATRNKRNIEEETDLSPPPKKLRSAVFLCSTPSSAPHCSQNVEVFDEFDDSLLEASSDESDSPLHMTLVQIEELLEDDCDYAAEPPRWDEESDSVGFLQELAVPNGSQSDLVELRNLNSPLAGEQSDSSQTLTEETVCSQDTSNYAAMAPSPCWSNISTAGQNEEAGGNVSTTTSPVLHKHEMDRGSRDSDICSTLSSSHLPGDLKVVDEISETSDIPFDGDIDELLTLSPGDTTSSEEDKITSESTPILSKLESVPVVHSHSEAFCKSSSSLQLPETSLASSTEPSPSLQLSASSVTAMNGQNNSNKVPPPTSDTAPGPQLGTDTNSQKSKGQKVEPKKNKPIEQIGLKQGGKSFAAPVDHPVKENLGQTSKEQVAASIGCKKKVNPSPLQEKKHGAVPTKPRAACRPQISNSELEKNRNIYRDRVMMHLEVHSISEEPNYELAYLLNETSRENPTWQHPSDYTKRNYYVRRQPAPCSLNDWVMRNGGHSIQRFHGLPCTFKRSPMPGVLPTGPT.

Disordered regions lie at residues 259–292 (SDIP…ESTP) and 313–400 (SSSS…GKSF). Residues 313 to 352 (SSSSLQLPETSLASSTEPSPSLQLSASSVTAMNGQNNSNK) are compositionally biased toward polar residues. The segment covering 378 to 387 (QKVEPKKNKP) has biased composition (basic and acidic residues).

The protein localises to the nucleus. The polypeptide is S100P-binding protein (s100pbp) (Xenopus laevis (African clawed frog)).